The following is a 306-amino-acid chain: D-alanine--D-alanine ligase (306 aa).

The 196-residue stretch at 106–301 folds into the ATP-grasp domain; that stretch reads KLLWQSAGIN…FEELVLKILG (196 aa). An ATP-binding site is contributed by 132-187; it reads AKELGLPLIVKPSREGSTIGLSKVREAGEVAAAWHLAARHDAMVLAEQFIEGTELT. Residues aspartate 255, glutamate 268, and asparagine 270 each coordinate Mg(2+).

The protein belongs to the D-alanine--D-alanine ligase family. Mg(2+) is required as a cofactor. The cofactor is Mn(2+).

The protein resides in the cytoplasm. It catalyses the reaction 2 D-alanine + ATP = D-alanyl-D-alanine + ADP + phosphate + H(+). It participates in cell wall biogenesis; peptidoglycan biosynthesis. Its function is as follows. Cell wall formation. In Nitrosospira multiformis (strain ATCC 25196 / NCIMB 11849 / C 71), this protein is D-alanine--D-alanine ligase.